The following is a 346-amino-acid chain: MARHPRWTLSQVTELFEKPLLELLFEAQQIHRQHFDPQQVQVSTLLSIKTGACPEDCKYCPQSSRYKTGLEAERLMAVEQVLDSARKAKNAGSTRFCMGAAWKNPHERDMPYLEQIVQGVKAMGLETCMTLGMLNESQAQRLANAGLDYYNHNLDTSPEFYGNIITTRTYQERLDTLEKVREAGIKVCSGGIVGLGETVTDRAGLLLQLANLPTPPESVPINMLVKVKGTPLADNDDVDAFDFIRTIAVARIMMPTSYVRLSAGREQMNEQTQAMCFMAGANSIFYGCKLLTTPNPAEDKDLQLFRKLGLNPQQTRVLAGDNEQQQRLEQTLMTPDTDDYYNAAAL.

The 219-residue stretch at 38 to 256 (QQVQVSTLLS…IAVARIMMPT (219 aa)) folds into the Radical SAM core domain. Residues cysteine 53, cysteine 57, and cysteine 60 each contribute to the [4Fe-4S] cluster site. The [2Fe-2S] cluster site is built by cysteine 97, cysteine 128, cysteine 188, and arginine 260.

It belongs to the radical SAM superfamily. Biotin synthase family. In terms of assembly, homodimer. It depends on [4Fe-4S] cluster as a cofactor. [2Fe-2S] cluster serves as cofactor.

The catalysed reaction is (4R,5S)-dethiobiotin + (sulfur carrier)-SH + 2 reduced [2Fe-2S]-[ferredoxin] + 2 S-adenosyl-L-methionine = (sulfur carrier)-H + biotin + 2 5'-deoxyadenosine + 2 L-methionine + 2 oxidized [2Fe-2S]-[ferredoxin]. It functions in the pathway cofactor biosynthesis; biotin biosynthesis; biotin from 7,8-diaminononanoate: step 2/2. Catalyzes the conversion of dethiobiotin (DTB) to biotin by the insertion of a sulfur atom into dethiobiotin via a radical-based mechanism. This is Biotin synthase from Salmonella gallinarum (strain 287/91 / NCTC 13346).